The chain runs to 107 residues: uncharacterized protein (107 aa).

Residues 6-107 (KKVIEQILDN…QAQVETLLAA (102 aa)) form the Glutaredoxin domain. Lys23 contacts glutathione. A [2Fe-2S] cluster-binding site is contributed by Cys31. Residues Arg60 and 85 to 86 (AD) each bind glutathione.

This sequence belongs to the glutaredoxin family. Monothiol subfamily.

It localises to the plastid. The protein resides in the chloroplast. This is an uncharacterized protein from Porphyra purpurea (Red seaweed).